The chain runs to 197 residues: Large ribosomal subunit protein bL17 (197 aa).

The segment at 120–197 is disordered; that stretch reads DVPPADTGQG…EEEESEEDNT (78 aa). Residues 127-136 show a composition bias toward gly residues; that stretch reads GQGGSGGTRR. The segment covering 159–197 has biased composition (acidic residues); that stretch reads SSDEESESVEEDEATAEEASADAEQGEAEEEEESEEDNT.

Belongs to the bacterial ribosomal protein bL17 family. In terms of assembly, part of the 50S ribosomal subunit. Contacts protein L32.

In Salinibacter ruber (strain DSM 13855 / M31), this protein is Large ribosomal subunit protein bL17.